Consider the following 144-residue polypeptide: Large ribosomal subunit protein uL15 (144 aa).

A disordered region spans residues 1–54; that stretch reads MRLNTLSPAPGRVTSRKRVGRGIGSGLGKTAGRGHKGLKSRSGGTVKPGFEGGQ. Gly residues predominate over residues 21–31; that stretch reads RGIGSGLGKTA.

Belongs to the universal ribosomal protein uL15 family. Part of the 50S ribosomal subunit.

Binds to the 23S rRNA. The protein is Large ribosomal subunit protein uL15 of Teredinibacter turnerae (strain ATCC 39867 / T7901).